The sequence spans 386 residues: Homoserine O-succinyltransferase (386 aa).

Residues 49–358 (NAILICHALS…DAEQGHDSFL (310 aa)) form the AB hydrolase-1 domain. Ser-156 functions as the Nucleophile in the catalytic mechanism. Position 226 (Arg-226) interacts with substrate. Residues Asp-321 and His-354 contribute to the active site. Asp-355 contacts substrate.

Belongs to the AB hydrolase superfamily. MetX family. As to quaternary structure, homodimer.

Its subcellular location is the cytoplasm. It carries out the reaction L-homoserine + succinyl-CoA = O-succinyl-L-homoserine + CoA. Its pathway is amino-acid biosynthesis; L-methionine biosynthesis via de novo pathway; O-succinyl-L-homoserine from L-homoserine: step 1/1. In terms of biological role, transfers a succinyl group from succinyl-CoA to L-homoserine, forming succinyl-L-homoserine. This Acinetobacter baumannii (strain AB307-0294) protein is Homoserine O-succinyltransferase.